A 347-amino-acid chain; its full sequence is Eukaryotic translation initiation factor 3 subunit H (347 aa).

The MPN domain maps to 1–142 (MKIMKHCSQT…LRAFRLSPRF (142 aa)).

This sequence belongs to the eIF-3 subunit H family. Component of the eukaryotic translation initiation factor 3 (eIF-3) complex.

It is found in the cytoplasm. Its function is as follows. Component of the eukaryotic translation initiation factor 3 (eIF-3) complex, which is involved in protein synthesis of a specialized repertoire of mRNAs and, together with other initiation factors, stimulates binding of mRNA and methionyl-tRNAi to the 40S ribosome. The eIF-3 complex specifically targets and initiates translation of a subset of mRNAs involved in cell proliferation. The protein is Eukaryotic translation initiation factor 3 subunit H of Neosartorya fischeri (strain ATCC 1020 / DSM 3700 / CBS 544.65 / FGSC A1164 / JCM 1740 / NRRL 181 / WB 181) (Aspergillus fischerianus).